The sequence spans 210 residues: Protein VNG_2543C (210 aa).

The AMMECR1 domain maps to 12–206 (EDGARTVELA…ETGDEDDPVE (195 aa)).

The sequence is that of Protein VNG_2543C from Halobacterium salinarum (strain ATCC 700922 / JCM 11081 / NRC-1) (Halobacterium halobium).